Reading from the N-terminus, the 33-residue chain is Alpha-amanitin proprotein (33 aa).

Residues methionine 1–proline 10 constitute a propeptide that is removed on maturation. The residue at position 11 (isoleucine 11) is a (3R,4R)-4,5-dihydroxyisoleucine; in form alpha-amanitin. (3R,4S)-4-hydroxyisoleucine; in form gamma-amanitin is present on isoleucine 11. The cyclopeptide (Ile-Pro) cross-link spans isoleucine 11–proline 18. Positions tryptophan 12–cysteine 16 form a cross-link, 2'-cysteinyl-6'-hydroxytryptophan sulfoxide (Trp-Cys). Proline 18 is subject to 4-hydroxyproline. A propeptide spanning residues serine 19–alanine 33 is cleaved from the precursor.

Belongs to the MSDIN fungal toxin family. In terms of processing, processed by the macrocyclase-peptidase enzyme POPB to yield a toxic cyclic decapeptide. POPB first removes 10 residues from the N-terminus. Conformational trapping of the remaining peptide forces the enzyme to release this intermediate rather than proceed to macrocyclization. The enzyme rebinds the remaining peptide in a different conformation and catalyzes macrocyclization of the N-terminal 8 residues.

Its function is as follows. Major toxin belonging to the bicyclic octapeptides amatoxins that acts by binding non-competitively to RNA polymerase II and greatly slowing the elongation of transcripts from target promoters. In Amanita rimosa, this protein is Alpha-amanitin proprotein.